The chain runs to 162 residues: Neuritin-like protein (162 aa).

Positions 1-32 are cleaved as a signal peptide; that stretch reads MMCNCCHCHWRRRCQRLPCALTLLLLLPLAVA. A136 carries the GPI-anchor amidated alanine lipid modification. Positions 137–162 are cleaved as a propeptide — removed in mature form; it reads PALAPAPAPVLLAAALALACLLGPLA.

The protein belongs to the neuritin family.

It localises to the cell membrane. In Mus musculus (Mouse), this protein is Neuritin-like protein (Nrn1l).